Consider the following 178-residue polypeptide: ATP-dependent protease subunit HslV (178 aa).

The active site involves T7. Na(+) is bound by residues G162, C165, and T168.

It belongs to the peptidase T1B family. HslV subfamily. A double ring-shaped homohexamer of HslV is capped on each side by a ring-shaped HslU homohexamer. The assembly of the HslU/HslV complex is dependent on binding of ATP.

It is found in the cytoplasm. It carries out the reaction ATP-dependent cleavage of peptide bonds with broad specificity.. With respect to regulation, allosterically activated by HslU binding. Its function is as follows. Protease subunit of a proteasome-like degradation complex believed to be a general protein degrading machinery. The sequence is that of ATP-dependent protease subunit HslV from Burkholderia ambifaria (strain MC40-6).